Consider the following 403-residue polypeptide: F-box/kelch-repeat protein At5g43190 (403 aa).

An F-box domain is found at 45 to 91 (PNIWSNLPNHLLEHILSLLPFKTLLTLRSISRHLRSLILSPSFISDH). 4 Kelch repeats span residues 91–140 (HSFS…LLSS), 192–240 (KIFT…VFYN), 291–339 (ILYM…VCYH), and 343–393 (HVYC…FRWF).

This chain is F-box/kelch-repeat protein At5g43190, found in Arabidopsis thaliana (Mouse-ear cress).